We begin with the raw amino-acid sequence, 882 residues long: Valine--tRNA ligase (882 aa).

The 'HIGH' region signature appears at P42–H52. The 'KMSKS' region motif lies at K522–S526. Residue K525 coordinates ATP. A coiled-coil region spans residues K849–N873.

This sequence belongs to the class-I aminoacyl-tRNA synthetase family. ValS type 1 subfamily. As to quaternary structure, monomer.

The protein localises to the cytoplasm. The enzyme catalyses tRNA(Val) + L-valine + ATP = L-valyl-tRNA(Val) + AMP + diphosphate. Catalyzes the attachment of valine to tRNA(Val). As ValRS can inadvertently accommodate and process structurally similar amino acids such as threonine, to avoid such errors, it has a 'posttransfer' editing activity that hydrolyzes mischarged Thr-tRNA(Val) in a tRNA-dependent manner. In Onion yellows phytoplasma (strain OY-M), this protein is Valine--tRNA ligase.